The chain runs to 119 residues: UPF0738 protein BAA_1286 (119 aa).

It belongs to the UPF0738 family.

This chain is UPF0738 protein BAA_1286, found in Bacillus anthracis (strain A0248).